The primary structure comprises 230 residues: Protein UPS2, mitochondrial (230 aa).

Residues 1 to 175 enclose the PRELI/MSF1 domain; that stretch reads MKLFQNSYDF…VLQVFSENWE (175 aa).

It belongs to the slowmo family. In terms of assembly, interacts with MDM35.

The protein resides in the mitochondrion inner membrane. The protein localises to the mitochondrion intermembrane space. Its function is as follows. Required for mitochondrial cristae morphogenesis and MGM1-processing. Controls the stability of mitochondrial phosphatidylethanolamine (PE). With UPS1, controls the level of cardiolipin in mitochondria. Cardiolipin is a unique phospholipid with four fatty acid chains and is present mainly in the mitochondrial inner membrane where it stabilizes the electron transport chain supercomplex between complexes III and IV through direct interaction of their subunits. This is Protein UPS2, mitochondrial (UPS2) from Saccharomyces cerevisiae (strain ATCC 204508 / S288c) (Baker's yeast).